Here is a 407-residue protein sequence, read N- to C-terminus: Imidazolonepropionase (407 aa).

Fe(3+) contacts are provided by His-68 and His-70. Residues His-68 and His-70 each coordinate Zn(2+). 4-imidazolone-5-propanoate is bound by residues Arg-77, Tyr-140, and His-173. Tyr-140 is an N-formimidoyl-L-glutamate binding site. Fe(3+) is bound at residue His-238. Residue His-238 coordinates Zn(2+). Gln-241 is a binding site for 4-imidazolone-5-propanoate. A Fe(3+)-binding site is contributed by Asp-313. Position 313 (Asp-313) interacts with Zn(2+). N-formimidoyl-L-glutamate-binding residues include Asn-315 and Gly-317. Residue Thr-318 coordinates 4-imidazolone-5-propanoate.

The protein belongs to the metallo-dependent hydrolases superfamily. HutI family. Zn(2+) is required as a cofactor. It depends on Fe(3+) as a cofactor.

The protein localises to the cytoplasm. It catalyses the reaction 4-imidazolone-5-propanoate + H2O = N-formimidoyl-L-glutamate. Its pathway is amino-acid degradation; L-histidine degradation into L-glutamate; N-formimidoyl-L-glutamate from L-histidine: step 3/3. Its function is as follows. Catalyzes the hydrolytic cleavage of the carbon-nitrogen bond in imidazolone-5-propanoate to yield N-formimidoyl-L-glutamate. It is the third step in the universal histidine degradation pathway. This Burkholderia ambifaria (strain ATCC BAA-244 / DSM 16087 / CCUG 44356 / LMG 19182 / AMMD) (Burkholderia cepacia (strain AMMD)) protein is Imidazolonepropionase.